We begin with the raw amino-acid sequence, 142 residues long: Fluoride-specific ion channel FluC 1 (142 aa).

The next 4 helical transmembrane spans lie at 23–43 (VNIA…YLID), 54–74 (LPLG…GLIG), 79–99 (GWLL…FSTF), and 116–136 (LGNV…AVSL). The Na(+) site is built by G91 and T94.

It belongs to the fluoride channel Fluc/FEX (TC 1.A.43) family.

It localises to the cell membrane. It carries out the reaction fluoride(in) = fluoride(out). With respect to regulation, na(+) is not transported, but it plays an essential structural role and its presence is essential for fluoride channel function. Fluoride-specific ion channel. Important for reducing fluoride concentration in the cell, thus reducing its toxicity. This is Fluoride-specific ion channel FluC 1 from Nocardia farcinica (strain IFM 10152).